The chain runs to 247 residues: Carboxy-S-adenosyl-L-methionine synthase (247 aa).

S-adenosyl-L-methionine is bound by residues Tyr-40, 65 to 67 (GSS), 90 to 91 (DN), 122 to 123 (DI), Asn-137, and Arg-204.

The protein belongs to the class I-like SAM-binding methyltransferase superfamily. Cx-SAM synthase family. As to quaternary structure, homodimer.

It catalyses the reaction prephenate + S-adenosyl-L-methionine = carboxy-S-adenosyl-L-methionine + 3-phenylpyruvate + H2O. Catalyzes the conversion of S-adenosyl-L-methionine (SAM) to carboxy-S-adenosyl-L-methionine (Cx-SAM). The polypeptide is Carboxy-S-adenosyl-L-methionine synthase (Pseudomonas fluorescens (strain SBW25)).